A 333-amino-acid chain; its full sequence is Anthranilate phosphoribosyltransferase (333 aa).

Residues G80, 83–84, T88, 90–93, 108–116, and S120 each bind 5-phospho-alpha-D-ribose 1-diphosphate; these read GD, NLST, and KHGNRSASG. An anthranilate-binding site is contributed by G80. S92 provides a ligand contact to Mg(2+). Anthranilate is bound at residue N111. R166 provides a ligand contact to anthranilate. Residues D224 and E225 each contribute to the Mg(2+) site.

This sequence belongs to the anthranilate phosphoribosyltransferase family. In terms of assembly, homodimer. The cofactor is Mg(2+).

The enzyme catalyses N-(5-phospho-beta-D-ribosyl)anthranilate + diphosphate = 5-phospho-alpha-D-ribose 1-diphosphate + anthranilate. It participates in amino-acid biosynthesis; L-tryptophan biosynthesis; L-tryptophan from chorismate: step 2/5. Functionally, catalyzes the transfer of the phosphoribosyl group of 5-phosphorylribose-1-pyrophosphate (PRPP) to anthranilate to yield N-(5'-phosphoribosyl)-anthranilate (PRA). The protein is Anthranilate phosphoribosyltransferase of Pyrobaculum aerophilum (strain ATCC 51768 / DSM 7523 / JCM 9630 / CIP 104966 / NBRC 100827 / IM2).